We begin with the raw amino-acid sequence, 599 residues long: rRNA (cytosine-C(5))-methyltransferase NOP2C (599 aa).

The 108-residue stretch at 158–265 (PKEVLVSRKC…IAVDLNHRVF (108 aa)) folds into the PUA domain. Residues 304-310 (CAAPGGK), aspartate 328, and aspartate 355 each bind S-adenosyl-L-methionine. Residues 372–454 (LINGDNSSSM…GGRAGKSQGF (83 aa)) form a disordered region. The segment covering 378-388 (SSSMTSHSELS) has biased composition (low complexity). The span at 399-412 (RRSEADKSCEKNDS) shows a compositional bias: basic and acidic residues. Polar residues predominate over residues 413–424 (TEQPNGGDNVSQ). Positions 428–438 (RKNKGRLKNGR) are enriched in basic residues. Aspartate 465 is an S-adenosyl-L-methionine binding site. Cysteine 516 acts as the Nucleophile in catalysis.

The protein belongs to the class I-like SAM-binding methyltransferase superfamily. RsmB/NOP family.

The protein resides in the nucleus. It localises to the nucleolus. The catalysed reaction is a cytidine in rRNA + S-adenosyl-L-methionine = a 5-methylcytidine in rRNA + S-adenosyl-L-homocysteine + H(+). Its function is as follows. Involved in ribosomal large subunit assembly. S-adenosyl-L-methionine-dependent methyltransferase that may methylates the C(5) position of cytosine in rRNA. May play a role in the regulation of the cell cycle and the increased nucleolar activity that is associated with the cell proliferation. Seems involved in the regulation of cell proliferation. This chain is rRNA (cytosine-C(5))-methyltransferase NOP2C, found in Arabidopsis thaliana (Mouse-ear cress).